A 146-amino-acid chain; its full sequence is Hemoglobin subunit beta-2 (146 aa).

Valine 1 bears the N-acetylvaline mark. One can recognise a Globin domain in the interval 2 to 146 (HLHGDEKAAV…VASALAHKYH (145 aa)). Lysine 17 carries the post-translational modification N6-succinyllysine. Serine 44 is modified (phosphoserine). Residue lysine 59 is modified to N6-succinyllysine. Residues histidine 63 and histidine 92 each coordinate heme b. Arginine 104 bears the Asymmetric dimethylarginine mark. At threonine 123 the chain carries Phosphothreonine.

It belongs to the globin family. As to quaternary structure, heterotetramer of two alpha chains and two beta chains. In terms of tissue distribution, red blood cells.

Functionally, involved in oxygen transport from the lung to the various peripheral tissues. The sequence is that of Hemoglobin subunit beta-2 (HBB2) from Tapirus terrestris (Lowland tapir).